The chain runs to 81 residues: MAHIVKIYDTCIGCTQCVRACPLDVLEMVPWDGCKASQMASAPRTEDCVGCKRCETACPTDFLSVRVYLGSESTRSMGLSY.

4Fe-4S ferredoxin-type domains are found at residues 2 to 31 and 39 to 68; these read AHIVKIYDTCIGCTQCVRACPLDVLEMVPW and MASAPRTEDCVGCKRCETACPTDFLSVRVY. 8 residues coordinate [4Fe-4S] cluster: C11, C14, C17, C21, C48, C51, C54, and C58.

As to quaternary structure, the eukaryotic PSI reaction center is composed of at least 11 subunits. [4Fe-4S] cluster is required as a cofactor.

The protein localises to the plastid. The protein resides in the chloroplast thylakoid membrane. The enzyme catalyses reduced [plastocyanin] + hnu + oxidized [2Fe-2S]-[ferredoxin] = oxidized [plastocyanin] + reduced [2Fe-2S]-[ferredoxin]. Apoprotein for the two 4Fe-4S centers FA and FB of photosystem I (PSI); essential for photochemical activity. FB is the terminal electron acceptor of PSI, donating electrons to ferredoxin. The C-terminus interacts with PsaA/B/D and helps assemble the protein into the PSI complex. Required for binding of PsaD and PsaE to PSI. PSI is a plastocyanin/cytochrome c6-ferredoxin oxidoreductase, converting photonic excitation into a charge separation, which transfers an electron from the donor P700 chlorophyll pair to the spectroscopically characterized acceptors A0, A1, FX, FA and FB in turn. The chain is Photosystem I iron-sulfur center from Chlamydomonas reinhardtii (Chlamydomonas smithii).